The primary structure comprises 396 residues: Pyruvate dehydrogenase E1 component subunit alpha type I, mitochondrial (396 aa).

Residues 1-25 (MIFVFANIFKVPTVSPSVMAISVRL) constitute a mitochondrion transit peptide. Pyruvate contacts are provided by H88, Y114, R115, G153, G161, V163, D192, G193, A194, N221, and Y223. Residues Y114 and R115 each coordinate thiamine diphosphate. The thiamine diphosphate site is built by G161, V163, D192, G193, A194, and N221. D192 is a binding site for Mg(2+). Mg(2+) contacts are provided by N221 and Y223. H288 lines the thiamine diphosphate pocket. A phosphoserine mark is found at S289 and S296.

As to quaternary structure, heterotetramer of two PDHA1 and two PDHB subunits. The heterotetramer interacts with DLAT, and is part of the multimeric pyruvate dehydrogenase complex that contains multiple copies of pyruvate dehydrogenase (E1), dihydrolipoamide acetyltransferase (DLAT, E2) and lipoamide dehydrogenase (DLD, E3). Requires thiamine diphosphate as cofactor. It depends on Mg(2+) as a cofactor.

Its subcellular location is the mitochondrion matrix. It catalyses the reaction N(6)-[(R)-lipoyl]-L-lysyl-[protein] + pyruvate + H(+) = N(6)-[(R)-S(8)-acetyldihydrolipoyl]-L-lysyl-[protein] + CO2. With respect to regulation, pyruvate dehydrogenase activity is inhibited by phosphorylation of PDHA1; it is reactivated by dephosphorylation. In terms of biological role, the pyruvate dehydrogenase complex catalyzes the overall conversion of pyruvate to acetyl-CoA and CO(2), and thereby links the glycolytic pathway to the tricarboxylic cycle. This chain is Pyruvate dehydrogenase E1 component subunit alpha type I, mitochondrial, found in Ascaris suum (Pig roundworm).